The primary structure comprises 502 residues: Bone morphogenetic protein receptor type-1B (502 aa).

An N-terminal signal peptide occupies residues 1 to 13 (MLLRSSGKLNVGT). Residues 1–24 (MLLRSSGKLNVGTKKEDGESTAPT) form a disordered region. The Extracellular portion of the chain corresponds to 14–126 (KKEDGESTAP…DFVDGPIHHK (113 aa)). 5 disulfide bridges follow: cysteine 32–cysteine 53, cysteine 34–cysteine 38, cysteine 47–cysteine 71, cysteine 81–cysteine 95, and cysteine 96–cysteine 102. Residues 127 to 148 (ALLISVTVCSLLLVLIILFCYF) form a helical membrane-spanning segment. Residues 149–502 (RYKRQEARPR…KMSESQDIKL (354 aa)) are Cytoplasmic-facing. One can recognise a GS domain in the interval 174–203 (ESLRDLIEQSQSSGSGSGLPLLVQRTIAKQ). Residues 204–494 (IQMVKQIGKG…LRVKKTLAKM (291 aa)) enclose the Protein kinase domain. Residues 210 to 218 (IGKGRYGEV) and lysine 231 each bind ATP. The Proton acceptor role is filled by aspartate 332.

Belongs to the protein kinase superfamily. TKL Ser/Thr protein kinase family. TGFB receptor subfamily. In terms of assembly, interacts with high affinity with GDF5; positively regulates chondrocyte differentiation. Interacts with SCUBE3. Interacts with TSC22D1/TSC-22. Interacts with TGFBR3. It depends on Mg(2+) as a cofactor. Mn(2+) is required as a cofactor. Autophosphorylated.

The protein resides in the cell membrane. It carries out the reaction L-threonyl-[receptor-protein] + ATP = O-phospho-L-threonyl-[receptor-protein] + ADP + H(+). The catalysed reaction is L-seryl-[receptor-protein] + ATP = O-phospho-L-seryl-[receptor-protein] + ADP + H(+). Its function is as follows. On ligand binding, forms a receptor complex consisting of two type II and two type I transmembrane serine/threonine kinases. Type II receptors phosphorylate and activate type I receptors which autophosphorylate, then bind and activate SMAD transcriptional regulators. Receptor for BMP7/OP-1. Receptor for GDF5. Positively regulates chondrocyte differentiation through GDF5 interaction. This is Bone morphogenetic protein receptor type-1B (Bmpr1b) from Mus musculus (Mouse).